A 338-amino-acid polypeptide reads, in one-letter code: Phosphate acyltransferase (338 aa).

The protein belongs to the PlsX family. As to quaternary structure, homodimer. Probably interacts with PlsY.

Its subcellular location is the cytoplasm. It catalyses the reaction a fatty acyl-[ACP] + phosphate = an acyl phosphate + holo-[ACP]. It functions in the pathway lipid metabolism; phospholipid metabolism. Functionally, catalyzes the reversible formation of acyl-phosphate (acyl-PO(4)) from acyl-[acyl-carrier-protein] (acyl-ACP). This enzyme utilizes acyl-ACP as fatty acyl donor, but not acyl-CoA. The chain is Phosphate acyltransferase from Endomicrobium trichonymphae.